The sequence spans 310 residues: L-lactate dehydrogenase (310 aa).

NAD(+) is bound by residues Met-10 to Val-11, Asp-32, Tyr-62, and Gly-76 to Val-77. Residues Gln-79, Arg-85, and Asn-117–Asp-120 contribute to the substrate site. Residues Ala-115–Asn-117 and Ser-140 contribute to the NAD(+) site. Residue Asp-145–Arg-148 coordinates substrate. Beta-D-fructose 1,6-bisphosphate is bound by residues Arg-150 and Gln-162–Tyr-167. Catalysis depends on His-172, which acts as the Proton acceptor. Tyr-218 bears the Phosphotyrosine mark. Thr-227 is a substrate binding site.

It belongs to the LDH/MDH superfamily. LDH family. As to quaternary structure, homotetramer.

The protein localises to the cytoplasm. It carries out the reaction (S)-lactate + NAD(+) = pyruvate + NADH + H(+). The protein operates within fermentation; pyruvate fermentation to lactate; (S)-lactate from pyruvate: step 1/1. With respect to regulation, allosterically activated by fructose 1,6-bisphosphate (FBP). It binds two fructose 1,6-bisphosphate (FBP) molecules per tetramer. Its function is as follows. Catalyzes the conversion of lactate to pyruvate. The protein is L-lactate dehydrogenase of Thermus caldophilus.